The sequence spans 76 residues: Translational regulator CsrA (76 aa).

The protein belongs to the CsrA/RsmA family. As to quaternary structure, homodimer; the beta-strands of each monomer intercalate to form a hydrophobic core, while the alpha-helices form wings that extend away from the core.

Its subcellular location is the cytoplasm. A translational regulator that binds mRNA to regulate translation initiation and/or mRNA stability. Usually binds in the 5'-UTR at or near the Shine-Dalgarno sequence preventing ribosome-binding, thus repressing translation. Its main target seems to be the major flagellin gene, while its function is anatagonized by FliW. This is Translational regulator CsrA from Helicobacter pylori (strain J99 / ATCC 700824) (Campylobacter pylori J99).